The following is a 946-amino-acid chain: Isoleucine--tRNA ligase (946 aa).

Positions P58 to H68 match the 'HIGH' region motif. E568 provides a ligand contact to L-isoleucyl-5'-AMP. Residues K609–S613 carry the 'KMSKS' region motif. K612 serves as a coordination point for ATP. Residues C908, C911, C928, and C931 each contribute to the Zn(2+) site.

This sequence belongs to the class-I aminoacyl-tRNA synthetase family. IleS type 1 subfamily. In terms of assembly, monomer. Zn(2+) is required as a cofactor.

It is found in the cytoplasm. It catalyses the reaction tRNA(Ile) + L-isoleucine + ATP = L-isoleucyl-tRNA(Ile) + AMP + diphosphate. Catalyzes the attachment of isoleucine to tRNA(Ile). As IleRS can inadvertently accommodate and process structurally similar amino acids such as valine, to avoid such errors it has two additional distinct tRNA(Ile)-dependent editing activities. One activity is designated as 'pretransfer' editing and involves the hydrolysis of activated Val-AMP. The other activity is designated 'posttransfer' editing and involves deacylation of mischarged Val-tRNA(Ile). The protein is Isoleucine--tRNA ligase of Chromohalobacter salexigens (strain ATCC BAA-138 / DSM 3043 / CIP 106854 / NCIMB 13768 / 1H11).